The following is a 391-amino-acid chain: Multidrug resistance protein MdtL (391 aa).

12 consecutive transmembrane segments (helical) span residues 4-24, 42-62, 69-89, 93-113, 131-151, 158-178, 203-222, 245-265, 269-289, 293-313, 331-351, and 356-376; these read FLIC…MYLV, IAFS…GKVA, PVAI…SLAE, LFLA…VVAF, LLNG…HLIM, SLFW…LFIL, FFLS…LTFV, ALTA…LGIF, TLMI…AVSP, VSLF…GVAM, LGIA…VVGI, and MLIG…MFVA.

The protein belongs to the major facilitator superfamily. DHA1 family. MdtL (TC 2.A.1.2.22) subfamily.

The protein localises to the cell inner membrane. In terms of biological role, confers resistance to chloramphenicol. This chain is Multidrug resistance protein MdtL, found in Escherichia coli O9:H4 (strain HS).